Consider the following 229-residue polypeptide: GTP cyclohydrolase 1 (229 aa).

The disordered stretch occupies residues 1-31; the sequence is MFRESDNTIAPSNQDLNKPVVDKEQPAERTP. Polar residues predominate over residues 7 to 16; that stretch reads NTIAPSNQDL. The Zn(2+) site is built by Cys117, His120, and Cys188.

It belongs to the GTP cyclohydrolase I family. In terms of assembly, toroid-shaped homodecamer, composed of two pentamers of five dimers.

It catalyses the reaction GTP + H2O = 7,8-dihydroneopterin 3'-triphosphate + formate + H(+). Its pathway is cofactor biosynthesis; 7,8-dihydroneopterin triphosphate biosynthesis; 7,8-dihydroneopterin triphosphate from GTP: step 1/1. This chain is GTP cyclohydrolase 1, found in Rhodopirellula baltica (strain DSM 10527 / NCIMB 13988 / SH1).